A 189-amino-acid polypeptide reads, in one-letter code: ATP-dependent protease subunit HslV (189 aa).

T12 is an active-site residue. Na(+) is bound by residues A172, C175, and T178.

This sequence belongs to the peptidase T1B family. HslV subfamily. As to quaternary structure, a double ring-shaped homohexamer of HslV is capped on each side by a ring-shaped HslU homohexamer. The assembly of the HslU/HslV complex is dependent on binding of ATP.

It localises to the cytoplasm. It carries out the reaction ATP-dependent cleavage of peptide bonds with broad specificity.. Allosterically activated by HslU binding. In terms of biological role, protease subunit of a proteasome-like degradation complex believed to be a general protein degrading machinery. This Anaplasma phagocytophilum (strain HZ) protein is ATP-dependent protease subunit HslV.